The primary structure comprises 390 residues: MLTSDLSNDLANPLPLAQALIRRPSVTPIDAGALDVMQAALEQLGFTCRRYPFGEVDNLYARRGTASPCFLFAGHTDVVPPGDDDAWRKPPFGAEAEDGVLWGRGAADMKGAIAAMVASVQRFLDTGEPKGSIAFLITGDEEGPAIHGTKAVLEALADEGETFDHCLVGEPTNPNVLGDTIKSGRRGSLNCTLTVTGRQGHVAYPERAENPIPALLDLLGRLLARKLDDGVPPFQPSNLEVTSVDVGNPTTNVIPAAATARFNIRFNIAHNGDALSDWIRSEVAKIDLDFDGRIEADIHVTGEAFLTPAGPFTTLLQDCVEAETGRRPALTTGGGTSDARFIQLYAPVAEFGLVGATMHQVDERVPVSDIETLTAIYTRILKGYFKDFPA.

His-75 contacts Zn(2+). The active site involves Asp-77. Asp-108 serves as a coordination point for Zn(2+). Glu-141 (proton acceptor) is an active-site residue. The Zn(2+) site is built by Glu-142, Glu-170, and His-359.

This sequence belongs to the peptidase M20A family. DapE subfamily. In terms of assembly, homodimer. Zn(2+) serves as cofactor. The cofactor is Co(2+).

It carries out the reaction N-succinyl-(2S,6S)-2,6-diaminopimelate + H2O = (2S,6S)-2,6-diaminopimelate + succinate. The protein operates within amino-acid biosynthesis; L-lysine biosynthesis via DAP pathway; LL-2,6-diaminopimelate from (S)-tetrahydrodipicolinate (succinylase route): step 3/3. Its function is as follows. Catalyzes the hydrolysis of N-succinyl-L,L-diaminopimelic acid (SDAP), forming succinate and LL-2,6-diaminopimelate (DAP), an intermediate involved in the bacterial biosynthesis of lysine and meso-diaminopimelic acid, an essential component of bacterial cell walls. In Maricaulis maris (strain MCS10) (Caulobacter maris), this protein is Succinyl-diaminopimelate desuccinylase.